We begin with the raw amino-acid sequence, 208 residues long: Peptide deformylase 3 (208 aa).

Residues C120 and H162 each contribute to the Fe cation site. E163 is an active-site residue. Residue H166 participates in Fe cation binding.

Belongs to the polypeptide deformylase family. The cofactor is Fe(2+).

It catalyses the reaction N-terminal N-formyl-L-methionyl-[peptide] + H2O = N-terminal L-methionyl-[peptide] + formate. Removes the formyl group from the N-terminal Met of newly synthesized proteins. Requires at least a dipeptide for an efficient rate of reaction. N-terminal L-methionine is a prerequisite for activity but the enzyme has broad specificity at other positions. In Streptomyces coelicolor (strain ATCC BAA-471 / A3(2) / M145), this protein is Peptide deformylase 3.